Reading from the N-terminus, the 344-residue chain is Adenosine kinase (344 aa).

Asp-298 is an active-site residue.

The protein belongs to the carbohydrate kinase PfkB family. It depends on Mg(2+) as a cofactor.

It catalyses the reaction adenosine + ATP = AMP + ADP + H(+). Its pathway is purine metabolism; AMP biosynthesis via salvage pathway; AMP from adenosine: step 1/1. This is Adenosine kinase (ADK) from Schizophyllum commune (Split gill fungus).